The chain runs to 1473 residues: NACHT, LRR and PYD domains-containing protein 1 (1473 aa).

A Pyrin domain is found at 1-92 (MAGGAWGRLA…CAQAQEGAGH (92 aa)). A disordered region spans residues 90–113 (AGHSPSFPYSPSEPHLGSPSQPTS). Phosphoserine; by MAPK11 and MAPK14 is present on residues S93, S99, and S101. Residue S107 is modified to Phosphoserine; by MAPK14. The short motif at 111 to 117 (PTSTAVL) is the ZAKalpha motif 1 element. The residue at position 112 (T112) is a Phosphothreonine; by MAPK11, MAPK14 and MAP3K20. At S113 the chain carries Phosphoserine; by MAP3K20. Phosphothreonine; by MAP3K20 occurs at positions 114 and 129. S132 carries the phosphoserine; by MAP3K20 modification. The interval 160–254 (LPSSPDHESP…HTSLQPHHHP (95 aa)) is disordered. Phosphoserine; by MAPK14 is present on S163. Phosphoserine; by MAPK11 and MAPk14 is present on S168. S170 carries the post-translational modification Phosphoserine; by MAPK11 and MAPK14. The span at 170–182 (SQESPNAPTSTAV) shows a compositional bias: polar residues. S173 is subject to Phosphoserine; by MAPK11. The ZAKalpha motif 2 signature appears at 177–183 (PTSTAVL). Position 178 is a phosphothreonine; by MAPK11 (T178). At S179 the chain carries Phosphoserine; by MAPK11 and MAP3K20. T180 carries the post-translational modification Phosphothreonine; by MAPK11 and MAP3K20. The span at 218–231 (EIREREREKSEKGR) shows a compositional bias: basic and acidic residues. Positions 328-637 (RIVILQGAAG…EFFAAMSYVL (310 aa)) constitute an NACHT domain. 334-341 (GAAGIGKS) serves as a coordination point for ATP. 6 LRR repeats span residues 809-830 (NLKELDLSGNSLSHSAVKSLCK), 838-858 (LLETLRLAGCGLTAEDCKDLA), 866-887 (TLTELDLSFNVLTDAGAKHLCQ), 895-915 (KLQRLQLVSCGLTSDCCQDLA), 923-944 (SLKELDLQQNNLDDVGVRLLCE), and 950-973 (ACKLIRLGLDQTTLSDEMRQELRA). The tract at residues 991-1017 (VMTPTEGLDTGEMSNSTSSLKRQRLGS) is disordered. The segment at 1079–1212 (FWGPTGPVAT…HHIVLENPSF (134 aa)) is ZU5. The 286-residue stretch at 1079-1364 (FWGPTGPVAT…LMPATTLIPP (286 aa)) folds into the FIIND domain. A UPA region spans residues 1213–1364 (SPLGVLLKMI…LMPATTLIPP (152 aa)). The region spanning 1374–1463 (DAPQLLHFVD…HLIMELWEKG (90 aa)) is the CARD domain.

The protein belongs to the NLRP family. Interacts (via LRR repeats) with BCL2 and BCL2L1 (via the loop between motifs BH4 and BH3); these interactions reduce NLRP1 inflammasome-induced CASP1 activation and IL1B release, possibly by impairing NLRP1 interaction with PYCARD. Interacts with NOD2; this interaction is enhanced in the presence of muramyl dipeptide (MDP) and increases IL1B release. Interacts with EIF2AK2/PKR; this interaction requires EIF2AK2 activity, is accompanied by EIF2AK2 autophosphorylation and promotes inflammasome assembly in response to danger-associated signals. Interacts with MEFV; this interaction targets NLRP1 to degradation by autophagy, hence preventing excessive IL1B- and IL18-mediated inflammation. Binds (via LRR domain) to dsDNA and dsRNA. Interacts with DPP9; leading to inhibit activation of the inflammasome. DPP9 acts via formation of a ternary complex, composed of a DPP9 homodimer, one full-length NLRP1 protein, and one cleaved C-terminus of NLRP1 (NACHT, LRR and PYD domains-containing protein 1, C-terminus). Interacts with DPP8; leading to inhibit activation of the inflammasome, probably via formation of a ternary complex with DPP8. As to quaternary structure, interacts with the C-terminal part of NLRP1 (NACHT, LRR and PYD domains-containing protein 1, C-terminus) in absence of pathogens and other damage-associated signals. In terms of assembly, interacts with the N-terminal part of NLRP1 (NACHT, LRR and PYD domains-containing protein 1, N-terminus) in absence of pathogens and other damage-associated signals. Homomultimer; forms the NLRP1 inflammasome polymeric complex, a filament composed of homopolymers of this form in response to pathogens and other damage-associated signals. The NLRP1 inflammasome polymeric complex associates with PYCARD/ASC. Interacts (via CARD domain) with PYCARD/ASC (via CARD domain); leading to pro-caspase-1 (proCASP1) recruitment. Pro-caspase-1 (proCASP1) filament formation increases local enzyme concentration, resulting in trans-autocleavage and activation. Active CASP1 then processes IL1B and IL18 precursors, leading to the release of mature cytokines in the extracellular milieu and inflammatory response. (Microbial infection) Interacts with vaccinia virus protein F1. As to quaternary structure, (Microbial infection) Interacts with human herpes virus 8/HHV-8 proteins ORF45; relieving autoinhibition of the NLRP1 inflammasome. In terms of processing, autocatalytically cleaved. Autocatalytic cleavage in FIIND region occurs constitutively, prior to activation signals, and is required for inflammasome activity (IL1B release), possibly by facilitating CASP1 binding. Both N- and C-terminal parts remain associated non-covalently. Ubiquitinated by the cullin:ZER1/ZYG11B complex in response to pathogen-associated signals, leading to its degradation by the proteasome and subsequent release of the cleaved C-terminal part of the protein (NACHT, LRR and PYD domains-containing protein 1, C-terminus), which polymerizes and forms the NLRP1 inflammasome. Post-translationally, phosphorylated by MAP3K20 isoform ZAKalpha, MAPK11 and MAPK14 in response to UV-B irradiation and ribosome collisions, promoting activation of the NLRP1 inflammasome and pyroptosis. In terms of processing, (Microbial infection) Cleaved between Gln-130 and Gly-131 by the Protease 3C from various human enteroviruses and rhinoviruses (EV68, EV71, Coxsackievirus B3, HRV-14 and HRV-16). This cleavage triggers N-glycine-mediated proteasomal degradation of the autoinhibitory NLRP1 N-terminal fragment via the cullin:ZER1/ZYG11B complex which liberates the activating C-terminal fragment and activates NLRP1 inflammasome. (Microbial infection) Cleaved between Gln-333 and Gly-334 by the 3C-like proteinase nsp5 from human coronavirus SARS-CoV-2. This cleavage liberates the activating C-terminal fragment and activates NLRP1 inflammasome, leading to downstream activation of GSDME and lung epithelial cell death. In terms of tissue distribution, widely expressed. Abundantly expressed in primary immune cells (isoform 1 and isoform 2), including in neutrophils, monocytes/macrophages, dendritic cells (mostly Langerhans cells), and B- and T-lymphocytes (at protein level). Strongly expressed in epithelial cells lining the glandular epithelium, such as that of the gastrointestinal tract (stomach, small intestine, colon), the respiratory tract (trachea and bronchi), and the endometrial and endocervical glands, gallbladder, prostate, and breast (at protein level). In testis, expressed in spermatogonia and primary spermatocytes, but not in Sertoli cells (at protein level). In the brain, expressed in neurons, in particular in pyramidal ones and in oligodendrocytes, but not detected in microglia (at protein level). Expressed in adult and fetal ocular tissues, including in adult and 24-week old fetal choroid, sclera, cornea, and optic nerve, as well as in adult retina and fetal retina/retinal pigment epithelium. Highly expressed in the skin throughout the epidermis and in dermal fibroblasts, in both glabrous skin and plantar skin. It is detected in keratinocytes, but not in melanocytes. Expressed in epidermal appendages such as hair follicles.

The protein resides in the cytoplasm. It is found in the cytosol. It localises to the nucleus. Its subcellular location is the inflammasome. It carries out the reaction ATP + H2O = ADP + phosphate + H(+). NLRP1 inflammasome is activated by cleavage by the Protease 3C from various human enteroviruses and rhinoviruses (EV68, EV71, Coxsackievirus B3, HRV-14 and HRV-16): cleavage promotes ubiquitination and degradation of the N-terminal part, releasing the cleaved C-terminal part of the protein (NACHT, LRR and PYD domains-containing protein 1, C-terminus), which polymerizes and forms the NLRP1 inflammasome. Activated double-stranded RNA: positive-strand RNA viruses such as Semliki forest virus and long dsRNA activate the NLRP1 inflammasome. In contrast to its mouse ortholog, not activated by Bacillus anthracis lethal toxin. NLRP1 inflammasome is inhibited by DPP8 and DPP9, which sequester the C-terminal fragment of NLRP1 (NACHT, LRR and PYD domains-containing protein 1, C-terminus) in a ternary complex, thereby preventing NLRP1 oligomerization and activation. NLRP1 inflammasome is activated by Val-boroPro (Talabostat, PT-100), an inhibitor of dipeptidyl peptidases DPP8 and DPP9. Val-boroPro relieves inhibition of DPP8 and/or DPP9 by promoting disruption of the ternary complex, releasing its C-terminal part from autoinhibition. ATPase activity is activated by dsRNA-binding but not dsDNA-binding. With respect to regulation, (Microbial infection) The NLRP1 inflammasome is activated by human herpes virus 8/HHV-8 protein ORF45, which interacts with the N-terminal part of NLRP1 and promotes its translocation into the nucleus, relieving autoinhibition and leading to activation. Its activity is regulated as follows. (Microbial infection) NLRP1 inflammasome is activated by cleavage by the 3C-like proteinase nsp5 from human coronavirus SARS-CoV-2. Functionally, acts as the sensor component of the NLRP1 inflammasome, which mediates inflammasome activation in response to various pathogen-associated signals, leading to subsequent pyroptosis. Inflammasomes are supramolecular complexes that assemble in the cytosol in response to pathogens and other damage-associated signals and play critical roles in innate immunity and inflammation. Acts as a recognition receptor (PRR): recognizes specific pathogens and other damage-associated signals, such as cleavage by some human enteroviruses and rhinoviruses, double-stranded RNA, UV-B irradiation, or Val-boroPro inhibitor, and mediates the formation of the inflammasome polymeric complex composed of NLRP1, CASP1 and PYCARD/ASC. In response to pathogen-associated signals, the N-terminal part of NLRP1 is degraded by the proteasome, releasing the cleaved C-terminal part of the protein (NACHT, LRR and PYD domains-containing protein 1, C-terminus), which polymerizes and associates with PYCARD/ASC to initiate the formation of the inflammasome complex: the NLRP1 inflammasome recruits pro-caspase-1 (proCASP1) and promotes caspase-1 (CASP1) activation, which subsequently cleaves and activates inflammatory cytokines IL1B and IL18 and gasdermin-D (GSDMD), leading to pyroptosis. In the absence of GSDMD expression, the NLRP1 inflammasome is able to recruit and activate CASP8, leading to activation of gasdermin-E (GSDME). Activation of NLRP1 inflammasome is also required for HMGB1 secretion; the active cytokines and HMGB1 stimulate inflammatory responses. Binds ATP and shows ATPase activity. Plays an important role in antiviral immunity and inflammation in the human airway epithelium. Specifically recognizes a number of pathogen-associated signals: upon infection by human rhinoviruses 14 and 16 (HRV-14 and HRV-16), NLRP1 is cleaved and activated which triggers NLRP1-dependent inflammasome activation and IL18 secretion. Positive-strand RNA viruses, such as Semliki forest virus and long dsRNA activate the NLRP1 inflammasome, triggering IL1B release in a NLRP1-dependent fashion. Acts as a direct sensor for long dsRNA and thus RNA virus infection. May also be activated by muramyl dipeptide (MDP), a fragment of bacterial peptidoglycan, in a NOD2-dependent manner. The NLRP1 inflammasome is also activated in response to UV-B irradiation causing ribosome collisions: ribosome collisions cause phosphorylation and activation of NLRP1 in a MAP3K20-dependent manner, leading to pyroptosis. In terms of biological role, constitutes the precursor of the NLRP1 inflammasome, which mediates autoproteolytic processing within the FIIND domain to generate the N-terminal and C-terminal parts, which are associated non-covalently in absence of pathogens and other damage-associated signals. Regulatory part that prevents formation of the NLRP1 inflammasome: in absence of pathogens and other damage-associated signals, interacts with the C-terminal part of NLRP1 (NACHT, LRR and PYD domains-containing protein 1, C-terminus), preventing activation of the NLRP1 inflammasome. In response to pathogen-associated signals, this part is ubiquitinated and degraded by the proteasome, releasing the cleaved C-terminal part of the protein, which polymerizes and forms the NLRP1 inflammasome. Its function is as follows. Constitutes the active part of the NLRP1 inflammasome. In absence of pathogens and other damage-associated signals, interacts with the N-terminal part of NLRP1 (NACHT, LRR and PYD domains-containing protein 1, N-terminus), preventing activation of the NLRP1 inflammasome. In response to pathogen-associated signals, the N-terminal part of NLRP1 is degraded by the proteasome, releasing this form, which polymerizes and associates with PYCARD/ASC to form of the NLRP1 inflammasome complex: the NLRP1 inflammasome complex then directly recruits pro-caspase-1 (proCASP1) and promotes caspase-1 (CASP1) activation, leading to gasdermin-D (GSDMD) cleavage and subsequent pyroptosis. Functionally, it is unclear whether is involved in inflammasome formation. It is not cleaved within the FIIND domain, does not assemble into specks, nor promote IL1B release. However, in an vitro cell-free system, it has been shown to be activated by MDP. This chain is NACHT, LRR and PYD domains-containing protein 1, found in Homo sapiens (Human).